The following is a 304-amino-acid chain: Small ribosomal subunit biogenesis GTPase RsgA (304 aa).

Positions 78–237 (VSFLTRPPVA…VADTPGFNRP (160 aa)) constitute a CP-type G domain. GTP-binding positions include 127–130 (TKTD) and 179–187 (GPSGVGKSS). Positions 262, 267, 269, and 275 each coordinate Zn(2+).

This sequence belongs to the TRAFAC class YlqF/YawG GTPase family. RsgA subfamily. In terms of assembly, monomer. Associates with 30S ribosomal subunit, binds 16S rRNA. Zn(2+) is required as a cofactor.

Its subcellular location is the cytoplasm. Functionally, one of several proteins that assist in the late maturation steps of the functional core of the 30S ribosomal subunit. Helps release RbfA from mature subunits. May play a role in the assembly of ribosomal proteins into the subunit. Circularly permuted GTPase that catalyzes slow GTP hydrolysis, GTPase activity is stimulated by the 30S ribosomal subunit. The protein is Small ribosomal subunit biogenesis GTPase RsgA of Synechococcus sp. (strain CC9311).